Reading from the N-terminus, the 367-residue chain is Anhydro-N-acetylmuramic acid kinase (367 aa).

11-18 (GTSLDGVD) lines the ATP pocket.

This sequence belongs to the anhydro-N-acetylmuramic acid kinase family.

The catalysed reaction is 1,6-anhydro-N-acetyl-beta-muramate + ATP + H2O = N-acetyl-D-muramate 6-phosphate + ADP + H(+). The protein operates within amino-sugar metabolism; 1,6-anhydro-N-acetylmuramate degradation. Its pathway is cell wall biogenesis; peptidoglycan recycling. Catalyzes the specific phosphorylation of 1,6-anhydro-N-acetylmuramic acid (anhMurNAc) with the simultaneous cleavage of the 1,6-anhydro ring, generating MurNAc-6-P. Is required for the utilization of anhMurNAc either imported from the medium or derived from its own cell wall murein, and thus plays a role in cell wall recycling. The sequence is that of Anhydro-N-acetylmuramic acid kinase from Bradyrhizobium diazoefficiens (strain JCM 10833 / BCRC 13528 / IAM 13628 / NBRC 14792 / USDA 110).